A 220-amino-acid chain; its full sequence is GTP-binding protein YPT53 (220 aa).

GTP is bound by residues 19–26, 67–71, and 125–128; these read GESAVGKS, DTAGQ, and NKMD. 2 S-geranylgeranyl cysteine lipidation sites follow: cysteine 218 and cysteine 220. Cysteine methyl ester is present on cysteine 220.

The protein belongs to the small GTPase superfamily. Rab family.

It localises to the cell membrane. Required for transport in the endocytic pathway and for correct sorting of the vacuolar hydrolases suggesting a possible intersection of the endocytic with the vacuolar sorting pathway. May be involved in recruiting the MON1-CCZ1 complex to membranes enriched in phosphatidylinositol 3-phosphate (PtdIns[3]P) or other charged lipids, leading to recruitment of YPT7. This Saccharomyces cerevisiae (strain ATCC 204508 / S288c) (Baker's yeast) protein is GTP-binding protein YPT53 (YPT53).